The chain runs to 395 residues: Acetate kinase (395 aa).

A Mg(2+)-binding site is contributed by N8. K15 contributes to the ATP binding site. R90 provides a ligand contact to substrate. The active-site Proton donor/acceptor is D147. Residues 207-211 (HLGNG), 284-286 (DMR), and 330-334 (GIGEN) each bind ATP. E383 contributes to the Mg(2+) binding site.

The protein belongs to the acetokinase family. In terms of assembly, homodimer. Mg(2+) serves as cofactor. It depends on Mn(2+) as a cofactor.

It is found in the cytoplasm. The enzyme catalyses acetate + ATP = acetyl phosphate + ADP. It functions in the pathway metabolic intermediate biosynthesis; acetyl-CoA biosynthesis; acetyl-CoA from acetate: step 1/2. Functionally, catalyzes the formation of acetyl phosphate from acetate and ATP. Can also catalyze the reverse reaction. In Enterococcus faecalis (strain ATCC 700802 / V583), this protein is Acetate kinase.